The primary structure comprises 257 residues: Indole-3-glycerol phosphate synthase (257 aa).

It belongs to the TrpC family.

The enzyme catalyses 1-(2-carboxyphenylamino)-1-deoxy-D-ribulose 5-phosphate + H(+) = (1S,2R)-1-C-(indol-3-yl)glycerol 3-phosphate + CO2 + H2O. The protein operates within amino-acid biosynthesis; L-tryptophan biosynthesis; L-tryptophan from chorismate: step 4/5. In Chlorobium chlorochromatii (strain CaD3), this protein is Indole-3-glycerol phosphate synthase.